We begin with the raw amino-acid sequence, 367 residues long: Selenoprotein Pa (367 aa).

Residues 1–19 (MWKALSLTLALCLLVGCSA) form the signal peptide. Residue U59 is a non-standard amino acid, selenocysteine. An N-linked (GlcNAc...) asparagine glycan is attached at N109. Positions 191–220 (EVNKPVEEEPRQDHGHHEHGHHEHQGEAER) are enriched in basic and acidic residues. The disordered stretch occupies residues 191–241 (EVNKPVEEEPRQDHGHHEHGHHEHQGEAERHRHGHHHPHHHHHHHRGQQQV). Over residues 221–237 (HRHGHHHPHHHHHHHRG) the composition is skewed to basic residues. Residues U267, U273, U279, U290, U292, U294, U310, U320, U322, U336, U338, U346, U353, U355, U362, and U364 are each a non-standard amino acid (selenocysteine). The disordered stretch occupies residues 309–367 (LUHCDEPLPASUPUQGLKEQDNHIKETUQURPAPPAEUELSQPTUVUPAGDATUGURKK). Positions 326 to 336 (KEQDNHIKETU) are enriched in basic and acidic residues.

Belongs to the selenoprotein P family.

The protein localises to the secreted. Might be responsible for some of the extracellular antioxidant defense properties of selenium or might be involved in the transport of selenium. The polypeptide is Selenoprotein Pa (sepp1a) (Danio rerio (Zebrafish)).